A 216-amino-acid polypeptide reads, in one-letter code: UPF0323 lipoprotein HPAG1_0235 (216 aa).

An N-terminal signal peptide occupies residues 1–27; sequence MKKPYRKISDYAIVGGLSALVMVSIVG. C28 is lipidated: N-palmitoyl cysteine. C28 carries the S-diacylglycerol cysteine lipid modification. The span at 159–196 shows a compositional bias: polar residues; sequence QRTYKSPQAYQRSQNSFSKSAPSASGMGTASKGQSGFF. A disordered region spans residues 159 to 216; it reads QRTYKSPQAYQRSQNSFSKSAPSASGMGTASKGQSGFFGSSRPTSSPAVSSGTRGFNA. Over residues 198 to 209 the composition is skewed to low complexity; the sequence is SSRPTSSPAVSS.

This sequence belongs to the UPF0323 family.

Its subcellular location is the cell membrane. The chain is UPF0323 lipoprotein HPAG1_0235 from Helicobacter pylori (strain HPAG1).